We begin with the raw amino-acid sequence, 519 residues long: Histidine ammonia-lyase (519 aa).

Positions 146-148 (ASG) form a cross-link, 5-imidazolinone (Ala-Gly). Serine 147 carries the 2,3-didehydroalanine (Ser) modification.

The protein belongs to the PAL/histidase family. In terms of processing, contains an active site 4-methylidene-imidazol-5-one (MIO), which is formed autocatalytically by cyclization and dehydration of residues Ala-Ser-Gly.

Its subcellular location is the cytoplasm. The catalysed reaction is L-histidine = trans-urocanate + NH4(+). It participates in amino-acid degradation; L-histidine degradation into L-glutamate; N-formimidoyl-L-glutamate from L-histidine: step 1/3. The polypeptide is Histidine ammonia-lyase (Psychrobacter sp. (strain PRwf-1)).